A 231-amino-acid chain; its full sequence is Biosynthetic peptidoglycan transglycosylase (231 aa).

A helical transmembrane segment spans residues 7–27 (LLFWLILVPILLVLLMQLYFF).

This sequence belongs to the glycosyltransferase 51 family.

The protein resides in the cell inner membrane. The catalysed reaction is [GlcNAc-(1-&gt;4)-Mur2Ac(oyl-L-Ala-gamma-D-Glu-L-Lys-D-Ala-D-Ala)](n)-di-trans,octa-cis-undecaprenyl diphosphate + beta-D-GlcNAc-(1-&gt;4)-Mur2Ac(oyl-L-Ala-gamma-D-Glu-L-Lys-D-Ala-D-Ala)-di-trans,octa-cis-undecaprenyl diphosphate = [GlcNAc-(1-&gt;4)-Mur2Ac(oyl-L-Ala-gamma-D-Glu-L-Lys-D-Ala-D-Ala)](n+1)-di-trans,octa-cis-undecaprenyl diphosphate + di-trans,octa-cis-undecaprenyl diphosphate + H(+). It functions in the pathway cell wall biogenesis; peptidoglycan biosynthesis. In terms of biological role, peptidoglycan polymerase that catalyzes glycan chain elongation from lipid-linked precursors. This chain is Biosynthetic peptidoglycan transglycosylase, found in Herminiimonas arsenicoxydans.